The chain runs to 269 residues: MTTISRYTVFGNPVAHSKSPQIHQQFALQEGVDIEYGRICADIGGFAQAVSIFFETGGCGANVTVPFKQEAFALADEYSERASAAGAVNTLILLENGKLRGDNTDGIGLSNDITQVKNIAIECKTILLLGAGGAVRGVIPVLKEHRPARIVIANRTHAKAEELARLFGIEAVPMADLNGGFDIIINGTSGSLSGQLPAVSPEIFRNCRLAYDMVYGDAAQAFLNFAQSNGAAEVSDGLGMLVGQAAASYSLWRGFTPDIRPVIEYMKAL.

Shikimate-binding positions include 17 to 19 (SKS) and Thr64. Lys68 serves as the catalytic Proton acceptor. Glu80 is a binding site for NADP(+). Shikimate is bound by residues Asn89 and Asp105. NADP(+) is bound by residues 130–134 (GAGGA), 154–159 (NRTHAK), and Met213. Tyr215 is a shikimate binding site. Gly237 contacts NADP(+).

This sequence belongs to the shikimate dehydrogenase family. Homodimer.

It catalyses the reaction shikimate + NADP(+) = 3-dehydroshikimate + NADPH + H(+). It participates in metabolic intermediate biosynthesis; chorismate biosynthesis; chorismate from D-erythrose 4-phosphate and phosphoenolpyruvate: step 4/7. Its function is as follows. Involved in the biosynthesis of the chorismate, which leads to the biosynthesis of aromatic amino acids. Catalyzes the reversible NADPH linked reduction of 3-dehydroshikimate (DHSA) to yield shikimate (SA). In Neisseria cinerea, this protein is Shikimate dehydrogenase (NADP(+)).